The chain runs to 297 residues: F-box only protein 2 (297 aa).

The tract at residues 1–47 (MDGDGDPESVSHPEEASPEEQPEEAGAEASAEEEQLREAEEEEEAEA) is disordered. Residues 16 to 47 (ASPEEQPEEAGAEASAEEEQLREAEEEEEAEA) are compositionally biased toward acidic residues. The 48-residue stretch at 48-95 (VEYLAELPEPLLLRVLAELPATELVQACRLVCLRWKELVDGAPLWLLK) folds into the F-box domain. S106 carries the post-translational modification Phosphoserine. Positions 117–297 (FYFLSKRRRN…VTNSSVWVEP (181 aa)) constitute an FBA domain. A carbohydrate is bound by residues 214–216 (RTD) and 279–280 (YW).

As to quaternary structure, component of the SCF(FBXO2) complex consisting of CUL1, RBX1, SKP1 and FBXO2. Predominantly detected as heterodimer with SKP1; the heterodimer with SKP1 is not part of the SCF(FBXO2) complex. As to expression, detected in brain and cochlea, in epithelial support cells and hair cells of the organ of Corti (at protein level).

The protein resides in the cytoplasm. It localises to the microsome membrane. It functions in the pathway protein modification; protein ubiquitination. Substrate recognition component of a SCF (SKP1-CUL1-F-box protein) E3 ubiquitin-protein ligase complex that mediates the ubiquitination and subsequent proteasomal degradation of target proteins. Involved in the endoplasmic reticulum-associated degradation pathway (ERAD) for misfolded lumenal proteins by recognizing and binding sugar chains on unfolded glycoproteins that are retrotranslocated into the cytosol and promoting their ubiquitination and subsequent degradation. Prevents formation of cytosolic aggregates of unfolded glycoproteins that have been retrotranslocated into the cytosol. Able to recognize and bind denatured glycoproteins, preferentially those of the high-mannose type. In Mus musculus (Mouse), this protein is F-box only protein 2 (Fbxo2).